Consider the following 311-residue polypeptide: Putative ABC transporter ATP-binding protein MG467 (311 aa).

The 227-residue stretch at 84 to 310 (ITINKMWKNV…IVSNQLVRPL (227 aa)) folds into the ABC transporter domain. An ATP-binding site is contributed by 122-129 (GSSGSGKT).

Belongs to the ABC transporter superfamily.

This Mycoplasma genitalium (strain ATCC 33530 / DSM 19775 / NCTC 10195 / G37) (Mycoplasmoides genitalium) protein is Putative ABC transporter ATP-binding protein MG467.